Here is a 463-residue protein sequence, read N- to C-terminus: MHEKLTTRFAPSPTGYLHIGGLRTALYNYLYARKNGGNFLLRIEDTDLKRNSKEATKAIIEAFKWCGLEHDGEVTYQSERFDLYKEYVKKLLDEGKAYYCYMSKEELEELRAKQEAAKERPRYDGRYREFTGTPPQGIEPVVRIKAPQSGEIVFKDGVKGEVRFKAEDIMDDFIIARSDGTPTYNFTVVIDDALMGVSDVIRGDDHLSNTPKQIVLYEALGFKIPQFFHVAMIHGEDGKKLSKRHGATDVMEYKEMGILPQALLNFLVRLGWSHGDDEVFSLEDLKKLFDPYHINKSASCYNAKKLEWLNTHYIKTLPFEEIKRQLKDLGFDLSVYEKAGFLLDLLRERAKTLHDIINGAKSIVNAPQNYDENAVQKFVNENNLELLQAFANTLKDPKTGKDFEDFTNDFLEKKEAKLKDLAQPIRIALTGSAVSPSIFEVLEFLGVDECKKRIENFLKVRGK.

The 'HIGH' region motif lies at 11 to 21; sequence PSPTGYLHIGG. Residues 240–244 carry the 'KMSKS' region motif; it reads KLSKR. Lys-243 is a binding site for ATP.

Belongs to the class-I aminoacyl-tRNA synthetase family. Glutamate--tRNA ligase type 1 subfamily. In terms of assembly, monomer.

It localises to the cytoplasm. It catalyses the reaction tRNA(Glu) + L-glutamate + ATP = L-glutamyl-tRNA(Glu) + AMP + diphosphate. Functionally, catalyzes the attachment of glutamate to tRNA(Glu) in a two-step reaction: glutamate is first activated by ATP to form Glu-AMP and then transferred to the acceptor end of tRNA(Glu). This chain is Glutamate--tRNA ligase 1, found in Campylobacter jejuni subsp. doylei (strain ATCC BAA-1458 / RM4099 / 269.97).